Reading from the N-terminus, the 180-residue chain is Ribosome maturation factor RimM (180 aa).

Positions 104 to 177 constitute a PRC barrel domain; it reads PEEFHDHQLV…RVVVDPPGGL (74 aa).

The protein belongs to the RimM family. As to quaternary structure, binds ribosomal protein uS19.

It localises to the cytoplasm. An accessory protein needed during the final step in the assembly of 30S ribosomal subunit, possibly for assembly of the head region. Essential for efficient processing of 16S rRNA. May be needed both before and after RbfA during the maturation of 16S rRNA. It has affinity for free ribosomal 30S subunits but not for 70S ribosomes. The polypeptide is Ribosome maturation factor RimM (Salinispora arenicola (strain CNS-205)).